A 373-amino-acid chain; its full sequence is UDP-sugar transporter UST74c (373 aa).

Positions 27 to 49 (LEEKMGGSADRSSLLDGSGSKEL) are disordered. S50 is subject to Phosphoserine. Helical transmembrane passes span 89-111 (HFPSFLFLSLGQLTASIVVLGMG), 131-153 (FPLPLIFLGNMMFGLGGTKTLSL), 174-196 (ILGLRPSNAVQVSVYAMIGGALL), 206-225 (MRGYIYVMITNALTASNGVY), 238-260 (YGLMYYNSLFMFLPALALNYVTG), 275-297 (VFVVQFLLSCVMGFILSYSTILC), 302-324 (SALTTTIVGCLKNICVTYLGMFI), and 329-351 (VFSWLNCIGINISVLASLLYTYV).

This sequence belongs to the TPT transporter family. SLC35D subfamily.

The protein resides in the golgi apparatus membrane. In terms of biological role, involved in the import of UDP-sugars from the cytoplasm into the Golgi lumen. In Drosophila melanogaster (Fruit fly), this protein is UDP-sugar transporter UST74c (frc).